A 66-amino-acid polypeptide reads, in one-letter code: Large ribosomal subunit protein uL29 (66 aa).

This sequence belongs to the universal ribosomal protein uL29 family.

This is Large ribosomal subunit protein uL29 from Helicobacter pylori (strain Shi470).